A 565-amino-acid polypeptide reads, in one-letter code: DNA ligase B (565 aa).

The active-site N6-AMP-lysine intermediate is the K130.

It belongs to the NAD-dependent DNA ligase family. LigB subfamily.

The enzyme catalyses NAD(+) + (deoxyribonucleotide)n-3'-hydroxyl + 5'-phospho-(deoxyribonucleotide)m = (deoxyribonucleotide)n+m + AMP + beta-nicotinamide D-nucleotide.. Its function is as follows. Catalyzes the formation of phosphodiester linkages between 5'-phosphoryl and 3'-hydroxyl groups in double-stranded DNA using NAD as a coenzyme and as the energy source for the reaction. This Yersinia enterocolitica serotype O:8 / biotype 1B (strain NCTC 13174 / 8081) protein is DNA ligase B.